A 499-amino-acid chain; its full sequence is Dipeptide and tripeptide permease A (499 aa).

The Cytoplasmic portion of the chain corresponds to 1–34 (MSTANKKPAESVSMNAFKQPRSFYLIFSIELWER). A helical membrane pass occupies residues 35–55 (FGFYGLQGIMAVYLVKQLGMS). Residues 56-59 (EADS) are Periplasmic-facing. Residues 60–80 (ITLFSSFSALVYGLVAIGGWL) form a helical membrane-spanning segment. Topologically, residues 81-89 (GDKVLGTKR) are cytoplasmic. Residues 90 to 110 (VIMLGTIVLAIGYALVAWSGH) traverse the membrane as a helical segment. Position 111 (Asp-111) is a topological domain, periplasmic. The chain crosses the membrane as a helical span at residues 112-132 (AAIVYFGMATIAVGNGLFKAN). At 133–153 (PSALLSTCYEKDDPRLDGAFT) the chain is on the cytoplasmic side. Residues 154–174 (MYYMAINIGSFFSMLATPWLA) traverse the membrane as a helical segment. The Periplasmic portion of the chain corresponds to 175-178 (EKFG). Residues 179 to 199 (WSVAFSLSFVGMLITLVNFIF) traverse the membrane as a helical segment. Residues 200 to 217 (CKKWVKDYGSKPDFAPLH) are Cytoplasmic-facing. The chain crosses the membrane as a helical span at residues 218–238 (VGKLLATIVGIVVLVAIATWL). Residues 239-246 (LHNQGIAR) lie on the Periplasmic side of the membrane. The chain crosses the membrane as a helical span at residues 247-267 (LVLGVVALGIVIIFAKEAFAM). The Cytoplasmic segment spans residues 268 to 274 (QGAARRK). Residues 275–295 (MIVAFILMLEAIVFFVLYQQM) form a helical membrane-spanning segment. The Periplasmic segment spans residues 296–320 (PTSLNFFAIRNVEHSILGIAFQPEQ). Residues 321-341 (FQALNPFWIMIGSPILAAIYN) form a helical membrane-spanning segment. Over 342–350 (KMGDRLPMP) the chain is Cytoplasmic. The chain crosses the membrane as a helical span at residues 351 to 371 (FKFTIGMLLCSGAFLVLPLGA). The Periplasmic segment spans residues 372–383 (KFASEAGIVSVN). A helical transmembrane segment spans residues 384–404 (WLILSYALQSIGELMISGLGL). At 405–414 (AMVAQLVPQR) the chain is on the cytoplasmic side. Residues 415 to 435 (LMGFIMGSWFLTTAGAAMIAG) form a helical membrane-spanning segment. The Periplasmic segment spans residues 436–459 (KVANLMAVPENVSDPLQSLEVYGR). The chain crosses the membrane as a helical span at residues 460–480 (VFMQIGIATGVIAVLMLLTAP). Over 481 to 499 (LLNRMTQEDKPKETDTAHA) the chain is Cytoplasmic.

It belongs to the major facilitator superfamily. Proton-dependent oligopeptide transporter (POT/PTR) (TC 2.A.17) family. DtpA subfamily.

The protein localises to the cell inner membrane. Its function is as follows. Proton-dependent permease that transports di- and tripeptides. This is Dipeptide and tripeptide permease A from Cronobacter turicensis (strain DSM 18703 / CCUG 55852 / LMG 23827 / z3032).